The chain runs to 64 residues: Conotoxin Vc1.3 (64 aa).

Residues 1–21 form the signal peptide; that stretch reads MGMRMMFTVFLLVVLATTVVS. Residues 22-43 constitute a propeptide that is removed on maturation; it reads FTSDRASDGRKAAASDLITLTI. Cystine bridges form between C46-C52 and C47-C60. The residue at position 60 (C60) is a Cysteine amide.

This sequence belongs to the conotoxin A superfamily. As to expression, expressed by the venom duct.

The protein localises to the secreted. May act as a toxin. In Conus victoriae (Queen Victoria cone), this protein is Conotoxin Vc1.3.